The chain runs to 297 residues: Farnesyl diphosphate synthase (297 aa).

The isopentenyl diphosphate site is built by Lys-47, Arg-50, and His-79. Residues Asp-86 and Asp-92 each contribute to the Mg(2+) site. Arg-97 serves as a coordination point for (2E)-geranyl diphosphate. Position 98 (Arg-98) interacts with isopentenyl diphosphate. Positions 183, 184, 221, and 238 each coordinate (2E)-geranyl diphosphate.

It belongs to the FPP/GGPP synthase family. Requires Mg(2+) as cofactor.

Its subcellular location is the cytoplasm. It catalyses the reaction isopentenyl diphosphate + (2E)-geranyl diphosphate = (2E,6E)-farnesyl diphosphate + diphosphate. This is Farnesyl diphosphate synthase from Geobacillus stearothermophilus (Bacillus stearothermophilus).